We begin with the raw amino-acid sequence, 784 residues long: Phosphate transporter PHO1 homolog 1 (784 aa).

Topologically, residues Met-1–Thr-387 are cytoplasmic. The SPX domain maps to Val-2–Lys-335. A helical transmembrane segment spans residues Phe-388 to Ala-408. Residues His-409–Pro-429 lie on the Extracellular side of the membrane. A helical membrane pass occupies residues Val-430–Met-450. The Cytoplasmic portion of the chain corresponds to Trp-451–Asp-474. The helical transmembrane segment at Val-475–Ser-495 threads the bilayer. At Leu-496–Gln-507 the chain is on the extracellular side. A helical transmembrane segment spans residues Val-508 to Phe-528. The Cytoplasmic segment spans residues Tyr-529–Ser-654. The region spanning Met-593–Asp-784 is the EXS domain. The helical transmembrane segment at Leu-655–Trp-675 threads the bilayer. At Asp-676–Ser-703 the chain is on the extracellular side. A helical membrane pass occupies residues Ile-704–Leu-724. The Cytoplasmic portion of the chain corresponds to His-725–Asp-784.

It belongs to the SYG1 (TC 2.A.94) family. Expressed in vascular cylinder of roots, leaves, stems, petals, sepals and filaments. Expressed in receptacle, stigma apex and anther connective tissue.

The protein resides in the cell membrane. Functionally, contributes to the loading of inorganic phosphate (Pi) into the root xylem vessels. The chain is Phosphate transporter PHO1 homolog 1 (PHO1-H1) from Arabidopsis thaliana (Mouse-ear cress).